The chain runs to 134 residues: Profilin-2 (134 aa).

Threonine 114 is modified (phosphothreonine).

Belongs to the profilin family. Occurs in many kinds of cells as a complex with monomeric actin in a 1:1 ratio. Phosphorylated by MAP kinases.

Its subcellular location is the cytoplasm. The protein resides in the cytoskeleton. Functionally, binds to actin and affects the structure of the cytoskeleton. At high concentrations, profilin prevents the polymerization of actin, whereas it enhances it at low concentrations. By binding to PIP2, it inhibits the formation of IP3 and DG. The sequence is that of Profilin-2 (PRO2) from Nicotiana tabacum (Common tobacco).